Reading from the N-terminus, the 415-residue chain is Protrudin (415 aa).

Residues 1 to 24 form a disordered region; that stretch reads MQTSDRDLSGPEASPSGMPEVLSE. Residues 1–66 lie on the Cytoplasmic side of the membrane; sequence MQTSDRDLSG…AGDGVRYLLR (66 aa). The interval 1-92 is sufficient for homooligomerization; that stretch reads MQTSDRDLSG…LFLTLNEGAW (92 aa). The interval 1–210 is sufficient for localization to endoplasmic reticulum tubular network and for interactions with REEP1, REEP5, ATL1, ATL2, ATL3 and SPAST; it reads MQTSDRDLSG…LYLLPLCWVL (210 aa). Residues 51–64 form a necessary for interaction with RAB11A and function in neurite outgrowth region; sequence LEPLKDAGDGVRYL. Residues 67-87 traverse the membrane as a helical segment; that stretch reads WQMPLCSLLTCLGLNILFLTL. N88 is a topological domain (lumenal). The helical transmembrane segment at 89 to 109 threads the bilayer; the sequence is EGAWYSMGALMISVPALLGYL. The Cytoplasmic portion of the chain corresponds to 110–192; sequence QEVCRGQLPE…NPVVSSQFYG (83 aa). Positions 193–213 form an intramembrane region, helical; it reads ALLGMVCMLYLLPLCWVLALL. Residues 214–415 are Cytoplasmic-facing; sequence NSTLFLGNGD…CASCNQTLSK (202 aa). The disordered stretch occupies residues 254 to 290; it reads QGAGGRGLLDSSPAPTPTEDLTPGSVEEAEEAEPDEE. Positions 275-365 are necessary for interaction with KIF5A; sequence TPGSVEEAEE…GCAATFSVLK (91 aa). The span at 280-290 shows a compositional bias: acidic residues; the sequence is EEAEEAEPDEE. The tract at residues 290-296 is necessary for interaction with VAPA; sequence EFKDAIE. The segment at 348-414 adopts an FYVE-type zinc-finger fold; it reads TNNFGNCAGC…VCASCNQTLS (67 aa). Residues C354, C357, C370, C373, C378, C381, C406, and C409 each contribute to the Zn(2+) site.

Can form homooligomers (monomers, dimers and tetramers). Interacts with RAB11A (GDP-bound form); regulates RAB11A. Interacts with FKBP8; may negatively regulate ZFYVE27 phosphorylation. Isoform 1 interacts to a greater extent than isoform 2 with VAPB (via MSP domain). Isoform 1 interacts to a greater extent than isoform 2 with VAPA (via MSP domain). Interaction with VAPA may regulate ZFYVE27 retention in the endoplasmic reticulum and its function in cell projections formation. Interacts with ATL2, ATL3, SPAST and RTN3. Interacts with REEP1, REEP5 and ATL1. Interacts with RAB11B (GDP-bound form), SURF4, KIF5B and KIF5C. Isoform 1 and 2 interact with KIFA. In terms of processing, phosphorylated. Phosphorylation is induced by NGF through the MAPK/ERK pathway and modulates interaction with RAB11A. As to expression, astrocytes express both isoform 1 and isoform 2 and oligodendrocytes express only isoform 2 (at protein level). Isoform 1 is expressed specifically in the central nervous system and selectively in neuronal cells. Isoform 2 is expressed in cerebrum, cerebellum, spinal cord, heart, thymus, spleen, intestine and lung.

Its subcellular location is the recycling endosome membrane. It localises to the endoplasmic reticulum membrane. It is found in the cell projection. The protein resides in the growth cone membrane. Its function is as follows. Key regulator of RAB11-dependent vesicular trafficking during neurite extension through polarized membrane transport. Promotes axonal elongation and contributes to the establishment of neuronal cell polarity. Involved in nerve growth factor-induced neurite formation in VAPA-dependent manner. Contributes to both the formation and stabilization of the tubular ER network. Involved in ER morphogenesis by regulating the sheet-to-tubule balance and possibly the density of tubule interconnections. Acts as an adapter protein that facilitates the interaction of KIF5A with VAPA, VAPB, SURF4, RAB11A, RAB11B and RTN3 and the ZFYVE27-KIF5A complex contributes to the transport of these proteins in neurons. Can induce formation of neurite-like membrane protrusions in non-neuronal cells in a KIF5A/B-dependent manner. This is Protrudin (Zfyve27) from Mus musculus (Mouse).